Here is a 143-residue protein sequence, read N- to C-terminus: Transcriptional regulator MraZ (143 aa).

SpoVT-AbrB domains are found at residues 5–47 (EYQH…SLEE) and 76–119 (AAEV…DKSK).

Belongs to the MraZ family. Forms oligomers.

The protein localises to the cytoplasm. The protein resides in the nucleoid. The polypeptide is Transcriptional regulator MraZ (Acetivibrio thermocellus (strain ATCC 27405 / DSM 1237 / JCM 9322 / NBRC 103400 / NCIMB 10682 / NRRL B-4536 / VPI 7372) (Clostridium thermocellum)).